Here is a 126-residue protein sequence, read N- to C-terminus: Fluoride-specific ion channel FluC (126 aa).

The next 4 helical transmembrane spans lie at 6–26 (FVAV…FSVL), 36–56 (YGTL…VGFF), 69–89 (LAIT…SEVV), and 99–119 (WAAM…ALGL). Na(+) is bound by residues glycine 76 and threonine 79.

It belongs to the fluoride channel Fluc/FEX (TC 1.A.43) family.

Its subcellular location is the cell inner membrane. It catalyses the reaction fluoride(in) = fluoride(out). Its activity is regulated as follows. Na(+) is not transported, but it plays an essential structural role and its presence is essential for fluoride channel function. Fluoride-specific ion channel. Important for reducing fluoride concentration in the cell, thus reducing its toxicity. The chain is Fluoride-specific ion channel FluC from Cupriavidus taiwanensis (strain DSM 17343 / BCRC 17206 / CCUG 44338 / CIP 107171 / LMG 19424 / R1) (Ralstonia taiwanensis (strain LMG 19424)).